The sequence spans 961 residues: Translation initiation factor IF-2 (961 aa).

Residues 146–158 (PSVPNKTLTTTPH) are compositionally biased toward polar residues. A disordered region spans residues 146–373 (PSVPNKTLTT…KTTSQVTTQP (228 aa)). Residues 163–176 (NHSEKDVLESHDSS) show a composition bias toward basic and acidic residues. Low complexity predominate over residues 177-187 (NKNIKQSSSQN). The span at 230 to 239 (SEEKNVDIQQ) shows a compositional bias: basic and acidic residues. 2 stretches are compositionally biased toward polar residues: residues 241 to 285 (EIPS…TAPH) and 301 to 310 (YQGQNRNNFI). Basic residues predominate over residues 355 to 364 (NRGRKRHKQK). One can recognise a tr-type G domain in the interval 460–627 (RRPPVVTIMG…LLALQTDILE (168 aa)). The tract at residues 469-476 (GHVDHGKT) is G1. 469–476 (GHVDHGKT) provides a ligand contact to GTP. The segment at 494–498 (GITQH) is G2. The G3 stretch occupies residues 515-518 (DTPG). Residues 515-519 (DTPGH) and 569-572 (NKMD) contribute to the GTP site. The tract at residues 569 to 572 (NKMD) is G4. The G5 stretch occupies residues 605-607 (SAK).

The protein belongs to the TRAFAC class translation factor GTPase superfamily. Classic translation factor GTPase family. IF-2 subfamily.

It localises to the cytoplasm. Its function is as follows. One of the essential components for the initiation of protein synthesis. Protects formylmethionyl-tRNA from spontaneous hydrolysis and promotes its binding to the 30S ribosomal subunits. Also involved in the hydrolysis of GTP during the formation of the 70S ribosomal complex. The polypeptide is Translation initiation factor IF-2 (Lawsonia intracellularis (strain PHE/MN1-00)).